The following is a 160-amino-acid chain: Transcription antitermination protein NusB (160 aa).

This sequence belongs to the NusB family.

Its function is as follows. Involved in transcription antitermination. Required for transcription of ribosomal RNA (rRNA) genes. Binds specifically to the boxA antiterminator sequence of the ribosomal RNA (rrn) operons. This chain is Transcription antitermination protein NusB, found in Allorhizobium ampelinum (strain ATCC BAA-846 / DSM 112012 / S4) (Agrobacterium vitis (strain S4)).